Here is a 309-residue protein sequence, read N- to C-terminus: HPr kinase/phosphorylase (309 aa).

Residues His-138 and Lys-159 contribute to the active site. 153–160 (GKSGVGKS) is an ATP binding site. Ser-160 contributes to the Mg(2+) binding site. The active-site Proton acceptor; for phosphorylation activity. Proton donor; for dephosphorylation activity is Asp-177. The segment at 201-210 (LEIRGLGIIN) is important for the catalytic mechanism of both phosphorylation and dephosphorylation. Glu-202 provides a ligand contact to Mg(2+). The active site involves Arg-243. Residues 264–269 (PVRPGR) form an important for the catalytic mechanism of dephosphorylation region.

This sequence belongs to the HPrK/P family. Homohexamer. The cofactor is Mg(2+).

The catalysed reaction is [HPr protein]-L-serine + ATP = [HPr protein]-O-phospho-L-serine + ADP + H(+). The enzyme catalyses [HPr protein]-O-phospho-L-serine + phosphate + H(+) = [HPr protein]-L-serine + diphosphate. Its function is as follows. Catalyzes the ATP- as well as the pyrophosphate-dependent phosphorylation of a specific serine residue in HPr, a phosphocarrier protein of the phosphoenolpyruvate-dependent sugar phosphotransferase system (PTS). HprK/P also catalyzes the pyrophosphate-producing, inorganic phosphate-dependent dephosphorylation (phosphorolysis) of seryl-phosphorylated HPr (P-Ser-HPr). The two antagonistic activities of HprK/P are regulated by several intracellular metabolites, which change their concentration in response to the absence or presence of rapidly metabolisable carbon sources (glucose, fructose, etc.) in the growth medium. Also phosphorylates/dephosphorylates the HPr-like catabolite repression protein crh on a specific serine residue. Therefore, by controlling the phosphorylation state of HPr and crh, HPrK/P is a sensor enzyme that plays a major role in the regulation of carbon metabolism and sugar transport: it mediates carbon catabolite repression (CCR), and regulates PTS-catalyzed carbohydrate uptake and inducer exclusion. The protein is HPr kinase/phosphorylase of Geobacillus thermodenitrificans (strain NG80-2).